Here is a 282-residue protein sequence, read N- to C-terminus: MAQHVKKPEWLKIRLGGNEKFTETKSIVEGHCLHTICTSGKCPNMGECWSRGTATFMIGGDICTRACRFCNTLTGRPKPLNEAEPTHVALSIKLMGLNHAVVTSVDRDDLPDYGATHWVKTIQEIRRINSGVTLEVLIPDFKGRMDLVDMIIEASPDVISHNLETVRRLTPSVRSVATYDTSLAVLRHIAQSGKMPAKTGMMLGLGETEEEILELMDDALAAGVSVITIGQYLQPSRKNLPVVEYITPEQFEHLRLVGIEKGFRTIESAPLVRSSYHAERHL.

[4Fe-4S] cluster is bound by residues Cys37, Cys42, Cys48, Cys63, Cys67, Cys70, and Ser275. Residues 49 to 264 (WSRGTATFMI…RLVGIEKGFR (216 aa)) enclose the Radical SAM core domain.

The protein belongs to the radical SAM superfamily. Lipoyl synthase family. Requires [4Fe-4S] cluster as cofactor.

Its subcellular location is the cytoplasm. The catalysed reaction is [[Fe-S] cluster scaffold protein carrying a second [4Fe-4S](2+) cluster] + N(6)-octanoyl-L-lysyl-[protein] + 2 oxidized [2Fe-2S]-[ferredoxin] + 2 S-adenosyl-L-methionine + 4 H(+) = [[Fe-S] cluster scaffold protein] + N(6)-[(R)-dihydrolipoyl]-L-lysyl-[protein] + 4 Fe(3+) + 2 hydrogen sulfide + 2 5'-deoxyadenosine + 2 L-methionine + 2 reduced [2Fe-2S]-[ferredoxin]. Its pathway is protein modification; protein lipoylation via endogenous pathway; protein N(6)-(lipoyl)lysine from octanoyl-[acyl-carrier-protein]: step 2/2. Its function is as follows. Catalyzes the radical-mediated insertion of two sulfur atoms into the C-6 and C-8 positions of the octanoyl moiety bound to the lipoyl domains of lipoate-dependent enzymes, thereby converting the octanoylated domains into lipoylated derivatives. This is Lipoyl synthase from Porphyromonas gingivalis (strain ATCC 33277 / DSM 20709 / CIP 103683 / JCM 12257 / NCTC 11834 / 2561).